A 507-amino-acid polypeptide reads, in one-letter code: Anthranilate synthase component 1 (507 aa).

Residue S65 coordinates L-tryptophan. A Phosphoserine modification is found at S81. Phosphothreonine is present on T223. L-tryptophan is bound at residue 280-282 (PYL). A chorismate-binding site is contributed by 316-317 (GT). E343 lines the Mg(2+) pocket. Residues Y431, R452, 466–468 (GGG), and G468 contribute to the chorismate site. E481 provides a ligand contact to Mg(2+).

This sequence belongs to the anthranilate synthase component I family. In terms of assembly, tetramer of two components I and two components II. It depends on Mg(2+) as a cofactor.

The catalysed reaction is chorismate + L-glutamine = anthranilate + pyruvate + L-glutamate + H(+). It participates in amino-acid biosynthesis; L-tryptophan biosynthesis; L-tryptophan from chorismate: step 1/5. The polypeptide is Anthranilate synthase component 1 (TRP2) (Saccharomyces cerevisiae (strain ATCC 204508 / S288c) (Baker's yeast)).